Here is a 1100-residue protein sequence, read N- to C-terminus: Formin-like protein 1 (1100 aa).

Over residues 1 to 13 (MGNAAGSAEQPAG) the composition is skewed to low complexity. Disordered regions lie at residues 1–31 (MGNAAGSAEQPAGPAAPPPKQPAPPKQPMPA), 167–200 (STDNGASNSEKNKPLEQSVEDLSKGPPSSVPKSR), 446–474 (RFSESTAMGPSRRPPEPEKAPPAAPTRPS), and 510–635 (TPSG…AKKP). Residue Gly-2 is the site of N-myristoyl glycine attachment. A Phosphoserine modification is found at Ser-7. Residues 14–28 (PAAPPPKQPAPPKQP) are compositionally biased toward pro residues. Residues 27 to 468 (QPMPAAGELE…PPEPEKAPPA (442 aa)) enclose the GBD/FH3 domain. At Ser-184 the chain carries Phosphoserine. Low complexity predominate over residues 517–538 (PTPGVPTGSPSPDLAPAAEPAP). Residues 539–615 (GAAPPPPPPL…PPPPPPPGGP (77 aa)) are compositionally biased toward pro residues. 2 positions are modified to phosphoserine: Ser-624 and Ser-693. One can recognise an FH2 domain in the interval 632-1023 (AKKPIQTKFR…QEAGADTPGK (392 aa)). The tract at residues 1008-1037 (KKEAAAQEAGADTPGKGEPPAPKSPPKARR) is disordered. The span at 1013–1023 (AQEAGADTPGK) shows a compositional bias: low complexity. A Phosphoserine modification is found at Ser-1031. Residues 1059 to 1090 (SDRDGAIEDIITVIKTVPFTARTGKRTSRLLC) form the DAD domain.

This sequence belongs to the formin homology family. In terms of assembly, interacts with RAC1, PFN1 and PFN2. Interacts (activated by RAC1) with SRGAP2 (via SH3 domain); regulates the actin filament severing activity of FMNL1. Myristoylation mediates membrane localization and blebbing. In terms of tissue distribution, expressed in heart, brain, placenta, lung, liver, skeletal muscle, kidney and pancreas.

It localises to the cytoplasm. The protein resides in the cell membrane. Its subcellular location is the cytoplasmic vesicle. The protein localises to the phagosome. It is found in the cell cortex. It localises to the cell projection. The protein resides in the bleb. Its function is as follows. May play a role in the control of cell motility and survival of macrophages. Plays a role in the regulation of cell morphology and cytoskeletal organization. Required in the cortical actin filament dynamics and cell shape. This chain is Formin-like protein 1 (FMNL1), found in Homo sapiens (Human).